We begin with the raw amino-acid sequence, 311 residues long: Linearmycin resistance ATP-binding protein LnrL (311 aa).

One can recognise an ABC transporter domain in the interval 2-232 (LQAENIKKAY…LGGDTIIQLT (231 aa)). 34-41 (GPNGAGKS) serves as a coordination point for ATP.

The protein belongs to the ABC transporter superfamily. In terms of assembly, the complex is composed of two ATP-binding proteins (LnrL) and two transmembrane proteins (LnrM and LnrN).

Functionally, required for resistance to linearmycins, a family of antibiotic-specialized metabolites produced by some streptomycetes. Part of the ABC transporter complex LnrLMN that probably facilitates linearmycin removal from the membrane. Responsible for energy coupling to the transport system. Also mediates KinC-dependent biofilm morphology. The polypeptide is Linearmycin resistance ATP-binding protein LnrL (Bacillus subtilis (strain 168)).